A 629-amino-acid chain; its full sequence is MVALSTLSGLSALPFLFSLVQNVYGVSLEVSTEKGNSSSPILYGFMFEDINHSGDGGIYGQLLRNNGLQGSKPGLTAWAAVGDATIAVDAQNPLTEAIPHSLKLDVKQGASGAVGFTNEGYWGVPVDGSEFLNTFWIKGNFSGDITVRLVGNNTGTEYGSTKISQSSNSSNFTKVLAKIPTKKAPDGAVLYELTVDGASVGGSSLNFGLFELFPQTYKSRSNGLKPQVAQPLADMKGSFLRFPGGNNLEGASEARRWKWNETIGPVENRPGRQGDWSYYNTDGLGLDEYFYWCEDMGLTPVLGVWAGFALESGGNTPITGDALKPYIDDVLNELEYVLGDASTKYGSLRASYGRKEPWKLTMVEIGNEDMLGGGCESYVERFTAFYDAIHAAYPDLTIIASTDQSSCLPSKLPEGAWVDYHNYNTADNLVKQFSQFDNKDRSVPYFIGEYSCQQDNAWPFMQGSVAEAVYMIGIERNSDVVKMAAYAPLLQLVNSTQWTPNLIAFTQNPSTVIETTSYYVQQMFSVNRGDTIHNVTSDSAFGPVYWVASSADDKYYVKLANYGADTQEITVTISGKTGGKLTVLADSDPKAFNSDTQTLVTPSESDVKATNGKFTFTLPAWSVGVLAAH.

Residues 1–25 (MVALSTLSGLSALPFLFSLVQNVYG) form the signal peptide. N-linked (GlcNAc...) asparagine glycans are attached at residues asparagine 36, asparagine 51, asparagine 140, asparagine 152, asparagine 168, asparagine 171, asparagine 260, asparagine 494, and asparagine 534.

This sequence belongs to the glycosyl hydrolase 51 family.

It is found in the secreted. The enzyme catalyses Hydrolysis of terminal non-reducing alpha-L-arabinofuranoside residues in alpha-L-arabinosides.. It functions in the pathway glycan metabolism; L-arabinan degradation. Alpha-L-arabinofuranosidase involved in the degradation of arabinoxylan, a major component of plant hemicellulose. Acts only on small linear 1,5-alpha-linked L-arabinofuranosyl oligosaccharides. The chain is Probable alpha-L-arabinofuranosidase A (abfA) from Aspergillus flavus (strain ATCC 200026 / FGSC A1120 / IAM 13836 / NRRL 3357 / JCM 12722 / SRRC 167).